We begin with the raw amino-acid sequence, 403 residues long: Aminomethyltransferase, mitochondrial (403 aa).

Residues 1-28 (MQRAMTVVPHLGLRLQALPLALGRPLSR) constitute a mitochondrion transit peptide. The substrate site is built by Glu-232, Arg-261, and Tyr-399.

Belongs to the GcvT family. The glycine cleavage system is composed of four proteins: P, T, L and H.

It is found in the mitochondrion. The catalysed reaction is N(6)-[(R)-S(8)-aminomethyldihydrolipoyl]-L-lysyl-[protein] + (6S)-5,6,7,8-tetrahydrofolate = N(6)-[(R)-dihydrolipoyl]-L-lysyl-[protein] + (6R)-5,10-methylene-5,6,7,8-tetrahydrofolate + NH4(+). Its function is as follows. The glycine cleavage system catalyzes the degradation of glycine. This chain is Aminomethyltransferase, mitochondrial, found in Canis lupus familiaris (Dog).